The sequence spans 200 residues: NADH-quinone oxidoreductase subunit I (200 aa).

2 4Fe-4S ferredoxin-type domains span residues 73–102 (RLLE…METT) and 112–141 (LNYS…HGGD). Positions 82, 85, 88, 92, 121, 124, 127, and 131 each coordinate [4Fe-4S] cluster.

The protein belongs to the complex I 23 kDa subunit family. NDH-1 is composed of 14 different subunits. Subunits NuoA, H, J, K, L, M, N constitute the membrane sector of the complex. The cofactor is [4Fe-4S] cluster.

Its subcellular location is the cell inner membrane. It carries out the reaction a quinone + NADH + 5 H(+)(in) = a quinol + NAD(+) + 4 H(+)(out). In terms of biological role, NDH-1 shuttles electrons from NADH, via FMN and iron-sulfur (Fe-S) centers, to quinones in the respiratory chain. The immediate electron acceptor for the enzyme in this species is believed to be ubiquinone. Couples the redox reaction to proton translocation (for every two electrons transferred, four hydrogen ions are translocated across the cytoplasmic membrane), and thus conserves the redox energy in a proton gradient. This chain is NADH-quinone oxidoreductase subunit I, found in Campylobacter hominis (strain ATCC BAA-381 / DSM 21671 / CCUG 45161 / LMG 19568 / NCTC 13146 / CH001A).